A 210-amino-acid chain; its full sequence is 3 beta-hydroxysteroid dehydrogenase/Delta 5--&gt;4-isomerase (210 aa).

Y29 acts as the Proton acceptor in catalysis. K33 serves as a coordination point for NAD(+).

This sequence belongs to the 3-beta-HSD family.

It catalyses the reaction a 3beta-hydroxy-Delta(5)-steroid + NAD(+) = a 3-oxo-Delta(5)-steroid + NADH + H(+). The enzyme catalyses a 3-oxo-Delta(5)-steroid = a 3-oxo-Delta(4)-steroid. It functions in the pathway lipid metabolism; steroid biosynthesis. Functionally, catalyzes the oxidative conversion of Delta(5)-ene-3-beta-hydroxy steroid, and the oxidative conversion of ketosteroids. The 3-beta-HSD enzymatic system plays a crucial role in the biosynthesis of all classes of hormonal steroids. During viral infection, steroid production contributes to virulence by inhibiting the host inflammatory response. In Variola virus (isolate Human/India/Ind3/1967) (VARV), this protein is 3 beta-hydroxysteroid dehydrogenase/Delta 5--&gt;4-isomerase (OPG174).